A 315-amino-acid polypeptide reads, in one-letter code: Ribosomal protein L11 methyltransferase (315 aa).

Thr164, Gly185, Asp207, and Asn250 together coordinate S-adenosyl-L-methionine.

The protein belongs to the methyltransferase superfamily. PrmA family.

It localises to the cytoplasm. The catalysed reaction is L-lysyl-[protein] + 3 S-adenosyl-L-methionine = N(6),N(6),N(6)-trimethyl-L-lysyl-[protein] + 3 S-adenosyl-L-homocysteine + 3 H(+). In terms of biological role, methylates ribosomal protein L11. The sequence is that of Ribosomal protein L11 methyltransferase from Exiguobacterium sibiricum (strain DSM 17290 / CCUG 55495 / CIP 109462 / JCM 13490 / 255-15).